A 568-amino-acid chain; its full sequence is MSISTFNRCWSKVILETLVRHNVKHVCIAPGSRSTPLTLEAVRLQERGEVRCHTHFDERGLGFLALGMAKSTNSPVAVIVTSGTAAANLYPAIIEARQSGEKLIVLTADRPAELLECGANQAILQENMFASYPVATVNLPKPGQNYAAKWLISTLDQACHSQLVEKGVVHINVPFAEPLYEANVTEIDEHVWLGPVRRWLGQHKKWTEYQEPQLEVLMHEHWDDWRTKRGVIVAGKLPQGHGMGLKLWAETMGWVLLTDVQSGVEPTLPYADIWLANKTVREKLLQADLVVQLGAHFVSKRINQFLSDFKGEFWVVDESPKRLDPYHHIQTRFNAKAHLWLRAHPPLRQKPWLLEAMALSNFCSSFIEQQVGGSLNEASLAHHIERAFPKNAALFLGNSLFVRLVDALTKRTENYPIYTNRGASGIDGLIATAVGVGIGANQAVAAVVGDMSALYDLNSLALLKKVTQPFVLFVINNNGGAIFDMLPVEAEAKNAYYRLPHNLGFAEAASVFDLKYARPYTWADLGSVLKQAYMRKEATVIEIKAGPNDATNLYKRLLEQISFAVIGA.

It belongs to the TPP enzyme family. MenD subfamily. In terms of assembly, homodimer. Mg(2+) is required as a cofactor. Requires Mn(2+) as cofactor. Thiamine diphosphate serves as cofactor.

It carries out the reaction isochorismate + 2-oxoglutarate + H(+) = 5-enolpyruvoyl-6-hydroxy-2-succinyl-cyclohex-3-ene-1-carboxylate + CO2. It participates in quinol/quinone metabolism; 1,4-dihydroxy-2-naphthoate biosynthesis; 1,4-dihydroxy-2-naphthoate from chorismate: step 2/7. It functions in the pathway quinol/quinone metabolism; menaquinone biosynthesis. Its function is as follows. Catalyzes the thiamine diphosphate-dependent decarboxylation of 2-oxoglutarate and the subsequent addition of the resulting succinic semialdehyde-thiamine pyrophosphate anion to isochorismate to yield 2-succinyl-5-enolpyruvyl-6-hydroxy-3-cyclohexene-1-carboxylate (SEPHCHC). The sequence is that of 2-succinyl-5-enolpyruvyl-6-hydroxy-3-cyclohexene-1-carboxylate synthase from Actinobacillus succinogenes (strain ATCC 55618 / DSM 22257 / CCUG 43843 / 130Z).